The sequence spans 114 residues: Hydrogenase maturation factor HypA (114 aa).

Residue histidine 2 coordinates Ni(2+). Cysteine 70, cysteine 73, cysteine 86, and cysteine 89 together coordinate Zn(2+).

It belongs to the HypA/HybF family.

Involved in the maturation of [NiFe] hydrogenases. Required for nickel insertion into the metal center of the hydrogenase. The protein is Hydrogenase maturation factor HypA of Rippkaea orientalis (strain PCC 8801 / RF-1) (Cyanothece sp. (strain PCC 8801)).